We begin with the raw amino-acid sequence, 101 residues long: UPF0060 membrane protein ACIAD1364 (101 aa).

3 helical membrane-spanning segments follow: residues tryptophan 24–proline 44, isoleucine 50–aspartate 70, and isoleucine 79–leucine 99.

Belongs to the UPF0060 family.

The protein localises to the cell inner membrane. This is UPF0060 membrane protein ACIAD1364 from Acinetobacter baylyi (strain ATCC 33305 / BD413 / ADP1).